We begin with the raw amino-acid sequence, 429 residues long: MTGNEQNPSKWLAAEKKYDSGVYNKHDVVMVRGQGATVWDENGRSYIDCVVGYGVATLGHSHPDVVKAVQEQAGKLMVMPQTVPNDKRAEFLQELVGVLPQGLDRVFLCNSGTEAMEAAKKFAITATGRSRFVSMKRGFSGRSLGALSFTWEPKYREPFGDAVDNKSVDFVTYGNLDELRAAVTEQTAAVIMEPVQGEGGVRPASAEFIQEARRITREKGALLILDEIQTGFCRTGKMFACEHFGVIPDGMTLAKAIAGGTPTAAFAMMSEVADRMPAGGHGTTFGGNPLSMAAGVASLRAMKREGLAEQAREKGAYMMDKLRAIQSPKIREVRGLGLMIGVELKEKSAPYIHAMEHDEGVLCLAATPLVVRFLPPAVISKEQIDQVVAAFERVLNNVNPREERQAELRAQQSEMGQQQVSQGESVQTE.

Pyridoxal 5'-phosphate is bound by residues 112-113 and F139; that span reads GT. R142 is a binding site for substrate. Position 226 to 229 (226 to 229) interacts with pyridoxal 5'-phosphate; it reads DEIQ. N6-(pyridoxal phosphate)lysine is present on K255. Position 283 (T283) interacts with substrate. Residue T284 participates in pyridoxal 5'-phosphate binding. Residues 408–429 are disordered; it reads LRAQQSEMGQQQVSQGESVQTE. Over residues 411 to 429 the composition is skewed to low complexity; the sequence is QQSEMGQQQVSQGESVQTE.

It belongs to the class-III pyridoxal-phosphate-dependent aminotransferase family. LysJ subfamily. Homodimer. Pyridoxal 5'-phosphate is required as a cofactor.

The protein localises to the cytoplasm. It carries out the reaction [amino-group carrier protein]-C-terminal-gamma-(L-lysyl)-L-glutamate + 2-oxoglutarate = [amino-group carrier protein]-C-terminal-N-(1-carboxy-5-oxopentan-1-yl)-L-glutamine + L-glutamate. It functions in the pathway amino-acid biosynthesis; L-lysine biosynthesis via AAA pathway; L-lysine from L-alpha-aminoadipate (Thermus route): step 4/5. Its function is as follows. Catalyzes the transfer of the amino group of L-glutamate to [LysW]-aminoadipate 6-semialdehyde, generating [LysW]-gamma-L-lysine. The protein is [LysW]-aminoadipate semialdehyde transaminase of Deinococcus radiodurans (strain ATCC 13939 / DSM 20539 / JCM 16871 / CCUG 27074 / LMG 4051 / NBRC 15346 / NCIMB 9279 / VKM B-1422 / R1).